The following is a 392-amino-acid chain: Lipid-A-disaccharide synthase (392 aa).

The protein belongs to the LpxB family.

It catalyses the reaction a lipid X + a UDP-2-N,3-O-bis[(3R)-3-hydroxyacyl]-alpha-D-glucosamine = a lipid A disaccharide + UDP + H(+). Its pathway is bacterial outer membrane biogenesis; LPS lipid A biosynthesis. Condensation of UDP-2,3-diacylglucosamine and 2,3-diacylglucosamine-1-phosphate to form lipid A disaccharide, a precursor of lipid A, a phosphorylated glycolipid that anchors the lipopolysaccharide to the outer membrane of the cell. This chain is Lipid-A-disaccharide synthase, found in Prochlorococcus marinus (strain MIT 9313).